The primary structure comprises 168 residues: NAD(P)H-quinone oxidoreductase subunit J, chloroplastic (168 aa).

This sequence belongs to the complex I 30 kDa subunit family. As to quaternary structure, NDH is composed of at least 16 different subunits, 5 of which are encoded in the nucleus.

The protein localises to the plastid. It localises to the chloroplast thylakoid membrane. It catalyses the reaction a plastoquinone + NADH + (n+1) H(+)(in) = a plastoquinol + NAD(+) + n H(+)(out). It carries out the reaction a plastoquinone + NADPH + (n+1) H(+)(in) = a plastoquinol + NADP(+) + n H(+)(out). NDH shuttles electrons from NAD(P)H:plastoquinone, via FMN and iron-sulfur (Fe-S) centers, to quinones in the photosynthetic chain and possibly in a chloroplast respiratory chain. The immediate electron acceptor for the enzyme in this species is believed to be plastoquinone. Couples the redox reaction to proton translocation, and thus conserves the redox energy in a proton gradient. In Chaetosphaeridium globosum (Charophycean green alga), this protein is NAD(P)H-quinone oxidoreductase subunit J, chloroplastic.